Consider the following 371-residue polypeptide: Fe(3+) ions import ATP-binding protein FbpC (371 aa).

Residues 5-235 enclose the ABC transporter domain; the sequence is IKIENAQKRY…PANLFVATFI (231 aa). Residue 37–44 coordinates ATP; the sequence is GPSGCGKT.

It belongs to the ABC transporter superfamily. Fe(3+) ion importer (TC 3.A.1.10) family. The complex is composed of two ATP-binding proteins (FbpC), two transmembrane proteins (FbpB) and a solute-binding protein (FbpA).

The protein resides in the cell inner membrane. The enzyme catalyses Fe(3+)(out) + ATP + H2O = Fe(3+)(in) + ADP + phosphate + H(+). Functionally, part of the ABC transporter complex FbpABC involved in Fe(3+) ions import. Responsible for energy coupling to the transport system. The chain is Fe(3+) ions import ATP-binding protein FbpC from Fusobacterium nucleatum subsp. nucleatum (strain ATCC 25586 / DSM 15643 / BCRC 10681 / CIP 101130 / JCM 8532 / KCTC 2640 / LMG 13131 / VPI 4355).